The following is a 393-amino-acid chain: Bifunctional enzyme Fae/Hps (393 aa).

The tract at residues 1–161 is formaldehyde-activating enzyme; that stretch reads MYLIGEALVG…HEKDRAAHAV (161 aa). His-17 (proton donor) is an active-site residue. Asp-19, Leu-48, Lys-66, Thr-68, and Gln-83 together coordinate substrate. A 3-hexulose-6-phosphate synthase region spans residues 162 to 393; sequence MGFKVQRLWD…IDQFRIMTDF (232 aa).

In the N-terminal section; belongs to the formaldehyde-activating enzyme family. The protein in the C-terminal section; belongs to the HPS/KGPDC family. HPS subfamily.

The enzyme catalyses 5,6,7,8-tetrahydromethanopterin + formaldehyde = 5,10-methylenetetrahydromethanopterin + H2O. It catalyses the reaction D-ribulose 5-phosphate + formaldehyde = D-arabino-hex-3-ulose 6-phosphate. It functions in the pathway carbohydrate biosynthesis; D-ribose 5-phosphate biosynthesis. In terms of biological role, catalyzes the condensation of formaldehyde with tetrahydromethanopterin (H(4)MPT) to 5,10-methylenetetrahydromethanopterin. Functionally, catalyzes the reversible formation of ribulose-5-phosphate and formaldehyde from 3-hexulose-6-phosphate. The protein is Bifunctional enzyme Fae/Hps of Methanoculleus marisnigri (strain ATCC 35101 / DSM 1498 / JR1).